The primary structure comprises 560 residues: Membrane protein insertase YidC (560 aa).

Residues 1–21 (MDIKRTILIAALAVVSYVMVL) traverse the membrane as a helical segment. Residues 42-66 (VAPGLPDGVPAGNNGASADVPSANA) form a disordered region. Transmembrane regions (helical) follow at residues 341 to 361 (LELT…FWLL), 367 to 387 (LLGN…GLFF), 437 to 457 (LGGC…YWVL), 468 to 488 (WMLW…PIIM), and 515 to 535 (PIIF…YWVV).

The protein belongs to the OXA1/ALB3/YidC family. Type 1 subfamily. In terms of assembly, interacts with the Sec translocase complex via SecD. Specifically interacts with transmembrane segments of nascent integral membrane proteins during membrane integration.

The protein resides in the cell inner membrane. Functionally, required for the insertion and/or proper folding and/or complex formation of integral membrane proteins into the membrane. Involved in integration of membrane proteins that insert both dependently and independently of the Sec translocase complex, as well as at least some lipoproteins. Aids folding of multispanning membrane proteins. The polypeptide is Membrane protein insertase YidC (Pseudomonas putida (strain GB-1)).